The chain runs to 113 residues: MAWALLLLTLLTQDTGSWAQSALTQPASVSGSPGQSITISCTGTSSDVGSYNLVSWYQQHPGKAPKLMIYEGSKRPSGVSNRFSGSKSGNTASLTISGLQAEDEADYYCCSYA.

The first 19 residues, 1–19, serve as a signal peptide directing secretion; sequence MAWALLLLTLLTQDTGSWA. The residue at position 20 (Gln20) is a Pyrrolidone carboxylic acid. The segment at 20–44 is framework-1; it reads QSALTQPASVSGSPGQSITISCTGT. In terms of domain architecture, Ig-like spans 20 to 113; the sequence is QSALTQPASV…EADYYCCSYA (94 aa). A disulfide bridge connects residues Cys41 and Cys109. Positions 45-53 are complementarity-determining-1; the sequence is SSDVGSYNL. The tract at residues 54 to 70 is framework-2; it reads VSWYQQHPGKAPKLMIY. A complementarity-determining-2 region spans residues 71 to 73; that stretch reads EGS. The tract at residues 73-92 is disordered; that stretch reads SKRPSGVSNRFSGSKSGNTA. The segment at 74 to 109 is framework-3; it reads KRPSGVSNRFSGSKSGNTASLTISGLQAEDEADYYC. A compositionally biased stretch (polar residues) spans 78–92; the sequence is GVSNRFSGSKSGNTA. The segment at 110–113 is complementarity-determining-3; it reads CSYA.

Immunoglobulins are composed of two identical heavy chains and two identical light chains; disulfide-linked.

It is found in the secreted. Its subcellular location is the cell membrane. Functionally, v region of the variable domain of immunoglobulin light chains that participates in the antigen recognition. Immunoglobulins, also known as antibodies, are membrane-bound or secreted glycoproteins produced by B lymphocytes. In the recognition phase of humoral immunity, the membrane-bound immunoglobulins serve as receptors which, upon binding of a specific antigen, trigger the clonal expansion and differentiation of B lymphocytes into immunoglobulins-secreting plasma cells. Secreted immunoglobulins mediate the effector phase of humoral immunity, which results in the elimination of bound antigens. The antigen binding site is formed by the variable domain of one heavy chain, together with that of its associated light chain. Thus, each immunoglobulin has two antigen binding sites with remarkable affinity for a particular antigen. The variable domains are assembled by a process called V-(D)-J rearrangement and can then be subjected to somatic hypermutations which, after exposure to antigen and selection, allow affinity maturation for a particular antigen. The polypeptide is Immunoglobulin lambda variable 2-23 (Homo sapiens (Human)).